A 139-amino-acid polypeptide reads, in one-letter code: Glucanase inhibitor protein 3 (139 aa).

The 138-residue stretch at Val1–Lys138 folds into the Peptidase S1 domain. Disulfide bonds link Cys61–Cys73 and Cys83–Cys114.

The protein belongs to the peptidase S1 family.

The protein localises to the secreted. Secreted effector that suppresses host plant glucan elicitor-mediated defense responses. Targets host endoglucanases and inhibits the endoglucanase-mediated release of elicitor-active glucan oligosaccharides from P.sojae cell walls. The chain is Glucanase inhibitor protein 3 from Phytophthora sojae (Soybean stem and root rot agent).